A 447-amino-acid polypeptide reads, in one-letter code: UPF0210 protein OEOE_0945 (447 aa).

Belongs to the UPF0210 family. As to quaternary structure, homodimer.

This chain is UPF0210 protein OEOE_0945, found in Oenococcus oeni (strain ATCC BAA-331 / PSU-1).